Here is a 1405-residue protein sequence, read N- to C-terminus: Centlein (1405 aa).

Residues 1–14 show a composition bias toward pro residues; it reads MAARSPPSPHPSPP. The interval 1-79 is disordered; it reads MAARSPPSPH…GGAAPAHAPL (79 aa). The residue at position 2 (alanine 2) is an N-acetylalanine. Phosphoserine is present on residues serine 5 and serine 22. Over residues 48–58 the composition is skewed to basic and acidic residues; that stretch reads VVADESDKIWV. Residues 61 to 71 are compositionally biased toward gly residues; it reads EGSGGRRGPGG. A coiled-coil region spans residues 95–126; it reads EEAMVTRTQLLEEELSSLKEELALCQADKEFV. 2 disordered regions span residues 421–450 and 493–529; these read KLKE…QVPH and SRKS…EELQ. Coiled coils occupy residues 613-655 and 681-793; these read NELA…ELNR and KNGK…ELIN. Residues 865 to 917 are disordered; sequence WEDVSESSSDSEAQTSQTLGTIIVETSQKISPTEDGKDQKESDPTEDSQTQGK. Over residues 877–895 the composition is skewed to polar residues; that stretch reads AQTSQTLGTIIVETSQKIS. The segment covering 896-907 has biased composition (basic and acidic residues); that stretch reads PTEDGKDQKESD. A coiled-coil region spans residues 980-1311; it reads NIILLRERII…IRELKKMKKN (332 aa). Phosphothreonine is present on threonine 1343.

Interacts with CEP250 and CEP68. Interacts with NEK2; the interaction leads to phosphorylation of CNTLN. In terms of processing, phosphorylated directly or indirectly by NEK2.

It is found in the cytoplasm. Its subcellular location is the cytoskeleton. The protein resides in the microtubule organizing center. It localises to the centrosome. The protein localises to the centriole. In terms of biological role, required for centrosome cohesion and recruitment of CEP68 to centrosomes. This is Centlein (CNTLN) from Homo sapiens (Human).